Here is a 124-residue protein sequence, read N- to C-terminus: Glycine cleavage system H protein (124 aa).

One can recognise a Lipoyl-binding domain in the interval 22-104 (LIVTGISDHA…YGKGWIYKMK (83 aa)). K63 carries the post-translational modification N6-lipoyllysine.

It belongs to the GcvH family. In terms of assembly, the glycine cleavage system is composed of four proteins: P, T, L and H. The cofactor is (R)-lipoate.

In terms of biological role, the glycine cleavage system catalyzes the degradation of glycine. The H protein shuttles the methylamine group of glycine from the P protein to the T protein. In Acinetobacter baylyi (strain ATCC 33305 / BD413 / ADP1), this protein is Glycine cleavage system H protein.